The following is a 131-amino-acid chain: Small ribosomal subunit protein bS6 (131 aa).

Lys93 carries the N6-acetyllysine modification. The interval 98–131 (EASPMVKAKDERRERRDDFANETADDAEAGDSEE) is disordered. Residues 104 to 116 (KAKDERRERRDDF) are compositionally biased toward basic and acidic residues. Acidic residues predominate over residues 120 to 131 (TADDAEAGDSEE).

The protein belongs to the bacterial ribosomal protein bS6 family.

In terms of biological role, binds together with bS18 to 16S ribosomal RNA. The polypeptide is Small ribosomal subunit protein bS6 (Escherichia fergusonii (strain ATCC 35469 / DSM 13698 / CCUG 18766 / IAM 14443 / JCM 21226 / LMG 7866 / NBRC 102419 / NCTC 12128 / CDC 0568-73)).